Reading from the N-terminus, the 156-residue chain is Transcription elongation factor GreA (156 aa).

Positions 1–32 (MKKVRLTREGYEKLKQELEELKRKFMYEISER) form a coiled coil.

The protein belongs to the GreA/GreB family.

Necessary for efficient RNA polymerase transcription elongation past template-encoded arresting sites. The arresting sites in DNA have the property of trapping a certain fraction of elongating RNA polymerases that pass through, resulting in locked ternary complexes. Cleavage of the nascent transcript by cleavage factors such as GreA or GreB allows the resumption of elongation from the new 3'terminus. GreA releases sequences of 2 to 3 nucleotides. The protein is Transcription elongation factor GreA of Thermotoga neapolitana (strain ATCC 49049 / DSM 4359 / NBRC 107923 / NS-E).